The sequence spans 75 residues: Small ribosomal subunit protein bS18 (75 aa).

It belongs to the bacterial ribosomal protein bS18 family. Part of the 30S ribosomal subunit. Forms a tight heterodimer with protein bS6.

Binds as a heterodimer with protein bS6 to the central domain of the 16S rRNA, where it helps stabilize the platform of the 30S subunit. The polypeptide is Small ribosomal subunit protein bS18 (Mycoplasma mycoides subsp. mycoides SC (strain CCUG 32753 / NCTC 10114 / PG1)).